The primary structure comprises 115 residues: NADH-ubiquinone oxidoreductase chain 3 (115 aa).

3 helical membrane-spanning segments follow: residues 4-24 (ALTL…AFWL), 55-75 (FFLV…LLPL), and 84-104 (LTTM…SLAY).

It belongs to the complex I subunit 3 family. As to quaternary structure, core subunit of respiratory chain NADH dehydrogenase (Complex I) which is composed of 45 different subunits. Interacts with TMEM186. Interacts with TMEM242.

Its subcellular location is the mitochondrion inner membrane. The enzyme catalyses a ubiquinone + NADH + 5 H(+)(in) = a ubiquinol + NAD(+) + 4 H(+)(out). Core subunit of the mitochondrial membrane respiratory chain NADH dehydrogenase (Complex I) which catalyzes electron transfer from NADH through the respiratory chain, using ubiquinone as an electron acceptor. Essential for the catalytic activity of complex I. This Halichoerus grypus (Gray seal) protein is NADH-ubiquinone oxidoreductase chain 3.